Here is a 68-residue protein sequence, read N- to C-terminus: Preprofallaxidin-5 (68 aa).

Positions 1 to 22 are cleaved as a signal peptide; that stretch reads MASLKKSLFLVLFLGFVSLSIC. Positions 23–51 are excised as a propeptide; it reads EEEKREDKEDEGENEEAEENHEERSEEKR. The segment at 24–50 is disordered; sequence EEKREDKEDEGENEEAEENHEERSEEK. Over residues 30 to 42 the composition is skewed to acidic residues; the sequence is KEDEGENEEAEEN. Leucine amide is present on leucine 64. Residue serine 68 is a propeptide.

This sequence belongs to the frog skin active peptide (FSAP) family. Brevinin subfamily. Expressed by the skin glands.

The protein localises to the secreted. This chain is Preprofallaxidin-5, found in Litoria fallax (Eastern dwarf tree frog).